The sequence spans 539 residues: T-complex protein 1 subunit delta (539 aa).

The segment at 1 to 29 (MPENVAPRSGATAGAAGGRGKGAYQDRDK) is disordered. Arginine 19 is subject to Omega-N-methylarginine. Lysine 21 carries the post-translational modification N6-acetyllysine. Position 36 is a phosphoserine (serine 36). Glycine 53 is a binding site for ADP. Glycine 53 is a binding site for ATP. Aspartate 104 is a binding site for Mg(2+). Residues glycine 105, threonine 106, threonine 107, serine 108, asparagine 172, serine 173, and lysine 174 each contribute to the ADP site. ATP contacts are provided by glycine 105 and threonine 106. Lysine 174 provides a ligand contact to ATP. Residues serine 184 and serine 202 each carry the phosphoserine modification. Residues lysine 288, lysine 302, lysine 319, and lysine 326 each carry the N6-acetyllysine modification. Glycine 425 serves as a coordination point for ADP. Serine 444 is modified (phosphoserine). Glutamine 510 provides a ligand contact to ADP.

The protein belongs to the TCP-1 chaperonin family. In terms of assembly, component of the chaperonin-containing T-complex (TRiC), a hexadecamer composed of two identical back-to-back stacked rings enclosing a protein folding chamber. Each ring is made up of eight different subunits: TCP1/CCT1, CCT2, CCT3, CCT4, CCT5, CCT6A/CCT6, CCT7, CCT8. Interacts with PACRG. Interacts with DNAAF4. Interacts with DLEC1.

It is found in the cytoplasm. The protein resides in the melanosome. The protein localises to the cytoskeleton. Its subcellular location is the microtubule organizing center. It localises to the centrosome. It is found in the cilium basal body. The catalysed reaction is ATP + H2O = ADP + phosphate + H(+). Functionally, component of the chaperonin-containing T-complex (TRiC), a molecular chaperone complex that assists the folding of actin, tubulin and other proteins upon ATP hydrolysis. The TRiC complex mediates the folding of WRAP53/TCAB1, thereby regulating telomere maintenance. As part of the TRiC complex may play a role in the assembly of BBSome, a complex involved in ciliogenesis regulating transports vesicles to the cilia. The protein is T-complex protein 1 subunit delta (CCT4) of Homo sapiens (Human).